Here is a 753-residue protein sequence, read N- to C-terminus: MEGPEITFAEAVIDNGSYGKRTVRFETGRLAQQAAGAAMVYLDEETSMLSATTVGKSPREGFDFFPLTVDVEERMYASGRIPGSFFRREGRPSTDAILTCRLIDRPLRPAFVKGIRNEVQVVVTVTSIAPDEIYDTVAINAASLSTQLSGLPFSGPIGGVRMALMDDGSGARQWVAFPKHSQLKGAVFNMAVAGRVVGDDVAIMMVEAEATPDSWTLVKERGAQAPTEEIVAEGLEAAKPFIRALCEAQADLVKRAGKDPVDVPVFQDYQDDAYAAVEKLATDRLTEIFSIADKQERESASYAYLLEVLEELAGEGKDFAERKGEIAKAYGSLTKQIVRRRILTDQVRIDGRGLTDIRKLTAEVEVLPRVHGSAIFERGETQIMGVTTLNMLKMEQQIDSLSPETAKRYMHHYNFPPYSTGETGRVGSPKRREIGHGALAERALVPVLPAREEFPYAIRQVSEALSSNGSTSMGSVCASTLSLLNAGVPLRAHVAGIAMGLVSAEVDGQTQYAALTDILGAEDAFGDMDFKVAGTAEFVTAIQLDTKLDGIPASVLASALTQAREARLHILSVLNAAIDAPDEMAPTAPRIISVRIPVDKIGAVIGPKGAMINQIQDDTGADITIEDDGTVLIGATDGASAEAARSAVNAIANPQVPEVGERYLGTVVKLTTFGAFVSLTPGKDGLLHVSELRKLNEGKRVDDVEDVLGVGQKVQVEITKIDDRGKLSLSPVGAESDAVAETADAIESSQTEA.

2 residues coordinate Mg(2+): aspartate 523 and aspartate 529. In terms of domain architecture, KH spans 589–648; it reads PRIISVRIPVDKIGAVIGPKGAMINQIQDDTGADITIEDDGTVLIGATDGASAEAARSAV. The S1 motif domain maps to 660–732; it reads GERYLGTVVK…DRGKLSLSPV (73 aa). Positions 733–753 are disordered; the sequence is GAESDAVAETADAIESSQTEA.

This sequence belongs to the polyribonucleotide nucleotidyltransferase family. Requires Mg(2+) as cofactor.

The protein resides in the cytoplasm. The catalysed reaction is RNA(n+1) + phosphate = RNA(n) + a ribonucleoside 5'-diphosphate. Involved in mRNA degradation. Catalyzes the phosphorolysis of single-stranded polyribonucleotides processively in the 3'- to 5'-direction. This is Polyribonucleotide nucleotidyltransferase from Micrococcus luteus (strain ATCC 4698 / DSM 20030 / JCM 1464 / CCM 169 / CCUG 5858 / IAM 1056 / NBRC 3333 / NCIMB 9278 / NCTC 2665 / VKM Ac-2230) (Micrococcus lysodeikticus).